The sequence spans 183 residues: Capsid protein (183 aa).

A disordered region spans residues 136–183 (NAPILSTLPETTVVRQRGRAPRRRTPSPRRRRSQSPRRRRSQSPASQC). The span at 151–176 (QRGRAPRRRTPSPRRRRSQSPRRRRS) shows a compositional bias: basic residues. A 1; half-length repeat occupies 155 to 161 (APRRRTP). The segment at 155 to 177 (APRRRTPSPRRRRSQSPRRRRSQ) is 3 X 8 AA repeats of S-P-R-R-R-[PR]-S-Q. Residues 158–175 (RRTPSPRRRRSQSPRRRR) carry the Bipartite nuclear localization signal motif. 2 positions are modified to phosphoserine; by host: serine 162 and serine 170. 2 consecutive repeat copies span residues 162 to 169 (SPRRRRSQ) and 170 to 177 (SPRRRRSQ). The tract at residues 177–183 (QSPASQC) is RNA binding.

It belongs to the orthohepadnavirus core antigen family. Homodimerizes, then multimerizes. Interacts with cytosol exposed regions of viral L glycoprotein present in the reticulum-to-Golgi compartment. Interacts with human FLNB. Phosphorylated form interacts with host importin alpha; this interaction depends on the exposure of the NLS, which itself depends upon genome maturation and/or phosphorylation of the capsid protein. Interacts with host NUP153. Post-translationally, phosphorylated by host SRPK1, SRPK2, and maybe protein kinase C or GAPDH. Phosphorylation is critical for pregenomic RNA packaging. Protein kinase C phosphorylation is stimulated by HBx protein and may play a role in transport of the viral genome to the nucleus at the late step during the viral replication cycle.

It localises to the virion. Its subcellular location is the host cytoplasm. Self assembles to form an icosahedral capsid. Most capsids appear to be large particles with an icosahedral symmetry of T=4 and consist of 240 copies of capsid protein, though a fraction forms smaller T=3 particles consisting of 180 capsid proteins. Entering capsids are transported along microtubules to the nucleus. Phosphorylation of the capsid is thought to induce exposure of nuclear localization signal in the C-terminal portion of the capsid protein that allows binding to the nuclear pore complex via the importin (karyopherin-) alpha and beta. Capsids are imported in intact form through the nuclear pore into the nuclear basket, where it probably binds NUP153. Only capsids that contain the mature viral genome can release the viral DNA and capsid protein into the nucleoplasm. Immature capsids get stuck in the basket. Capsids encapsulate the pre-genomic RNA and the P protein. Pre-genomic RNA is reverse-transcribed into DNA while the capsid is still in the cytoplasm. The capsid can then either be directed to the nucleus, providing more genomes for transcription, or bud through the endoplasmic reticulum to provide new virions. This Homo sapiens (Human) protein is Capsid protein.